The primary structure comprises 130 residues: Small ribosomal subunit protein uS9 (130 aa).

Belongs to the universal ribosomal protein uS9 family.

The polypeptide is Small ribosomal subunit protein uS9 (Magnetococcus marinus (strain ATCC BAA-1437 / JCM 17883 / MC-1)).